A 364-amino-acid polypeptide reads, in one-letter code: Probable transcription factor At4g00390 (364 aa).

The disordered stretch occupies residues 1–149 (MTKKLDPPTA…STKRVKKDEE (149 aa)). A compositionally biased stretch (acidic residues) spans 13-32 (SDEDDVETSEDDSSSSEEDE). The segment covering 39–80 (ATTAAAPAKSTAVSAATPAKSTSVSAAAPSKSTAVSAAADSD) has biased composition (low complexity). The span at 81-93 (SGSESETDSDSES) shows a compositional bias: acidic residues.

Belongs to the GeBP family.

This chain is Probable transcription factor At4g00390, found in Arabidopsis thaliana (Mouse-ear cress).